The following is a 247-amino-acid chain: (7aS)-7a-methyl-1,5-dioxo-2,3,5,6,7,7a-hexahydro-1H-indene-carboxyl-CoA hydrolase (247 aa).

It belongs to the enoyl-CoA hydratase/isomerase family.

The catalysed reaction is (7aS)-7a-methyl-1,5-dioxo-2,3,5,6,7,7a-hexahydro-1H-indene-carboxyl-CoA + H2O = (3E)-2-(2-carboxylatoethyl)-3-methyl-6-oxocyclohex-1-ene-1-carboxyl-CoA + H(+). It functions in the pathway steroid metabolism; cholesterol degradation. Functionally, involved in the final steps of cholesterol and steroid degradation. Catalyzes the hydrolytic ring D opening of (7aS)-7a-methyl-1,5-dioxo-2,3,5,6,7,7a-hexahydro-1H-indene-carboxyl-CoA (HIEC-CoA) to (3E)-2-(2-carboxylatoethyl)-3-methyl-6-oxocyclohex-1-ene-1-carboxyl-CoA (COCHEA-CoA). The protein is (7aS)-7a-methyl-1,5-dioxo-2,3,5,6,7,7a-hexahydro-1H-indene-carboxyl-CoA hydrolase of Mycobacterium tuberculosis (strain ATCC 25618 / H37Rv).